The following is a 382-amino-acid chain: Bifunctional enzyme IspD/IspF (382 aa).

Residues 1-225 (MTGKPSIAAL…AEERMAMISR (225 aa)) are 2-C-methyl-D-erythritol 4-phosphate cytidylyltransferase. A 2-C-methyl-D-erythritol 2,4-cyclodiphosphate synthase region spans residues 225–382 (RTAMGFDVHG…AVATVRVPSI (158 aa)). Positions 231 and 233 each coordinate a divalent metal cation. Residues 231 to 233 (DVH) and 257 to 258 (HS) contribute to the 4-CDP-2-C-methyl-D-erythritol 2-phosphate site. His-265 is a binding site for a divalent metal cation. 4-CDP-2-C-methyl-D-erythritol 2-phosphate-binding positions include 279 to 281 (DIG), 355 to 358 (TTTE), Phe-362, and Arg-365.

The protein in the N-terminal section; belongs to the IspD/TarI cytidylyltransferase family. IspD subfamily. In the C-terminal section; belongs to the IspF family. A divalent metal cation is required as a cofactor.

The catalysed reaction is 2-C-methyl-D-erythritol 4-phosphate + CTP + H(+) = 4-CDP-2-C-methyl-D-erythritol + diphosphate. It carries out the reaction 4-CDP-2-C-methyl-D-erythritol 2-phosphate = 2-C-methyl-D-erythritol 2,4-cyclic diphosphate + CMP. It participates in isoprenoid biosynthesis; isopentenyl diphosphate biosynthesis via DXP pathway; isopentenyl diphosphate from 1-deoxy-D-xylulose 5-phosphate: step 2/6. It functions in the pathway isoprenoid biosynthesis; isopentenyl diphosphate biosynthesis via DXP pathway; isopentenyl diphosphate from 1-deoxy-D-xylulose 5-phosphate: step 4/6. Functionally, bifunctional enzyme that catalyzes the formation of 4-diphosphocytidyl-2-C-methyl-D-erythritol from CTP and 2-C-methyl-D-erythritol 4-phosphate (MEP) (IspD), and catalyzes the conversion of 4-diphosphocytidyl-2-C-methyl-D-erythritol 2-phosphate (CDP-ME2P) to 2-C-methyl-D-erythritol 2,4-cyclodiphosphate (ME-CPP) with a corresponding release of cytidine 5-monophosphate (CMP) (IspF). The chain is Bifunctional enzyme IspD/IspF from Rhizorhabdus wittichii (strain DSM 6014 / CCUG 31198 / JCM 15750 / NBRC 105917 / EY 4224 / RW1) (Sphingomonas wittichii).